Reading from the N-terminus, the 225-residue chain is 2-C-methyl-D-erythritol 4-phosphate cytidylyltransferase (225 aa).

This sequence belongs to the IspD/TarI cytidylyltransferase family. IspD subfamily.

It carries out the reaction 2-C-methyl-D-erythritol 4-phosphate + CTP + H(+) = 4-CDP-2-C-methyl-D-erythritol + diphosphate. It functions in the pathway isoprenoid biosynthesis; isopentenyl diphosphate biosynthesis via DXP pathway; isopentenyl diphosphate from 1-deoxy-D-xylulose 5-phosphate: step 2/6. Its function is as follows. Catalyzes the formation of 4-diphosphocytidyl-2-C-methyl-D-erythritol from CTP and 2-C-methyl-D-erythritol 4-phosphate (MEP). In Cereibacter sphaeroides (strain ATCC 17029 / ATH 2.4.9) (Rhodobacter sphaeroides), this protein is 2-C-methyl-D-erythritol 4-phosphate cytidylyltransferase.